Here is a 600-residue protein sequence, read N- to C-terminus: Adenine deaminase 2 (600 aa).

The protein belongs to the metallo-dependent hydrolases superfamily. Adenine deaminase family. Mn(2+) is required as a cofactor.

It carries out the reaction adenine + H2O + H(+) = hypoxanthine + NH4(+). The chain is Adenine deaminase 2 from Bradyrhizobium sp. (strain ORS 278).